The chain runs to 964 residues: uncharacterized protein (964 aa).

Acidic residues predominate over residues 97-117 (DSESDVGSDAESDAESDAESD). The interval 97–208 (DSESDVGSDA…SNSIDNESES (112 aa)) is disordered. Positions 121–148 (HTQNNTNTPINNITLINLDSSNNSTQSD) are enriched in low complexity. The segment covering 149 to 163 (NESDNESDNESDNES) has biased composition (acidic residues). A compositionally biased stretch (low complexity) spans 192–203 (NSDNIGNSNSID).

This is an uncharacterized protein from Acanthamoeba polyphaga (Amoeba).